We begin with the raw amino-acid sequence, 665 residues long: Chaperone protein dnaK1 (665 aa).

Phosphothreonine; by autocatalysis is present on Thr198. The disordered stretch occupies residues 634–665 (DDPWDNQMNSNSRNSRYGNSRDDDPWDNDYFL). Residues 642–651 (NSNSRNSRYG) are compositionally biased toward low complexity.

The protein belongs to the heat shock protein 70 family.

Its function is as follows. Acts as a chaperone. This Prochlorococcus marinus subsp. pastoris (strain CCMP1986 / NIES-2087 / MED4) protein is Chaperone protein dnaK1 (dnaK1).